Here is a 711-residue protein sequence, read N- to C-terminus: Interferon-induced GTP-binding protein Mx2 (711 aa).

In terms of domain architecture, Dynamin-type G spans 115–387 (DLALPAIAVI…LILHINKSLP (273 aa)). A G1 motif region spans residues 125–132 (GDQSSGKS). 125 to 132 (GDQSSGKS) provides a ligand contact to GTP. A G2 motif region spans residues 150–152 (VTR). The interval 225–228 (DLPG) is G3 motif. GTP-binding positions include 225–229 (DLPGI) and 294–297 (TKPD). Residues 294-297 (TKPD) are G4 motif. Positions 326-329 (RCRG) are G5 motif. One can recognise a GED domain in the interval 623–711 (NDEIGVHLNA…ARRALYMFFS (89 aa)).

It belongs to the TRAFAC class dynamin-like GTPase superfamily. Dynamin/Fzo/YdjA family.

Its subcellular location is the cytoplasm. It localises to the nucleus. Interferon-induced dynamin-like GTPase with antiviral activity against vesicular stomatitis virus (VSV). This is Interferon-induced GTP-binding protein Mx2 (MX2) from Canis lupus familiaris (Dog).